The primary structure comprises 615 residues: DNA mismatch repair protein MutL (615 aa).

Residues 363–397 (FAEPAAREPVAPRYTPAPASGSRPAAPWPNAQPGY) form a disordered region. Low complexity predominate over residues 364-391 (AEPAAREPVAPRYTPAPASGSRPAAPWP).

The protein belongs to the DNA mismatch repair MutL/HexB family.

Functionally, this protein is involved in the repair of mismatches in DNA. It is required for dam-dependent methyl-directed DNA mismatch repair. May act as a 'molecular matchmaker', a protein that promotes the formation of a stable complex between two or more DNA-binding proteins in an ATP-dependent manner without itself being part of a final effector complex. The sequence is that of DNA mismatch repair protein MutL from Escherichia coli O8 (strain IAI1).